The primary structure comprises 592 residues: MAWLIYFFEEPISIHLGTWFSVGDIQVNYGTLLDSLSMVVMVPVGIVTLSVLIYAIDYMRYDPNRNRFYIILSVFAIFMTVLVISDNYIMMFMGWEFVGVVSYLLISFWNTRIAAMKSALSAILLNRMGDTLFVICIGTMLSYFHAVDFETMELMTPHTDTYMLNLMAMMLLMAATAKSAQLGLHGWLLSAMEGPTPVSALTHAATMVCSGVFVLVRSSFMLEYTPSMLLVMLWLAGFTTLMSGLMAVVSNDMKRVMALSTMSQLAMMMLAMGSSAYDLAMYHLYCHAFFKALLFMSAGSIMHSYMSETQDMRKYGGLINYLPFSYTTMLMASLSLMAMPGLTGYYSKDIIMESLYGTYTVSGYIMYYIATASATLTAIYSLRVTYLTFYNVPRSNKYTFAHVHESTHMAMPMFILTIYSMFLGYARDNVTFHLVMGLPHTNSFIETEYTLPAMFKLLPLMLGLSLSLTTVYMYEFTYKMSKSSVYNYFNQRIYYDQLTNNLIMRPVLKLGGATNAYTDNGLLRVLGSTGMSRALINIPVLLMMNMTYTFIVFFTYMKYFYIIPATRGRKLYMILYTKCMINIFHTPEAGII.

14 consecutive transmembrane segments (helical) span residues 36-56 (LSMV…IYAI), 68-88 (FYII…SDNY), 89-109 (IMMF…ISFW), 132-152 (LFVI…FETM), 169-189 (MMLL…GWLL), 196-216 (TPVS…FVLV), 229-249 (LLVM…MAVV), 256-276 (VMAL…GSSA), 279-299 (LAMY…MSAG), 322-342 (LPFS…MPGL), 364-386 (YIMY…RVTY), 406-426 (STHM…LGYA), 451-471 (LPAM…LTTV), and 534-554 (ALIN…IVFF).

Belongs to the complex I subunit 5 family.

It localises to the mitochondrion inner membrane. The enzyme catalyses a ubiquinone + NADH + 5 H(+)(in) = a ubiquinol + NAD(+) + 4 H(+)(out). Its function is as follows. Core subunit of the mitochondrial membrane respiratory chain NADH dehydrogenase (Complex I) that is believed to belong to the minimal assembly required for catalysis. Complex I functions in the transfer of electrons from NADH to the respiratory chain. The immediate electron acceptor for the enzyme is believed to be ubiquinone. This chain is NADH-ubiquinone oxidoreductase chain 5 (ND5), found in Debaryomyces hansenii (strain ATCC 36239 / CBS 767 / BCRC 21394 / JCM 1990 / NBRC 0083 / IGC 2968) (Yeast).